Here is a 309-residue protein sequence, read N- to C-terminus: Pantoate--beta-alanine ligase (309 aa).

This sequence belongs to the pantothenate synthetase family.

It localises to the cytoplasm. The protein localises to the nucleus. It carries out the reaction (R)-pantoate + beta-alanine + ATP = (R)-pantothenate + AMP + diphosphate + H(+). Its pathway is cofactor biosynthesis; (R)-pantothenate biosynthesis; (R)-pantothenate from (R)-pantoate and beta-alanine: step 1/1. Required for pantothenic acid biosynthesis. This Saccharomyces cerevisiae (strain ATCC 204508 / S288c) (Baker's yeast) protein is Pantoate--beta-alanine ligase (PAN6).